The chain runs to 93 residues: uncharacterized protein (93 aa).

Positions 26–73 (NRGTIFRPMTRNSGIVGRRGGPVAPAPFRNNVQKPGTRPPGFKPPSGV) are disordered.

This is an uncharacterized protein from Caenorhabditis elegans.